Reading from the N-terminus, the 421-residue chain is UDP-N-acetylglucosamine 1-carboxyvinyltransferase (421 aa).

Residue 22-23 (KN) coordinates phosphoenolpyruvate. Arg93 lines the UDP-N-acetyl-alpha-D-glucosamine pocket. The active-site Proton donor is the Cys117. 2-(S-cysteinyl)pyruvic acid O-phosphothioketal is present on Cys117. UDP-N-acetyl-alpha-D-glucosamine is bound by residues 122–126 (RPVDL), Asp308, and Ile330.

Belongs to the EPSP synthase family. MurA subfamily.

The protein resides in the cytoplasm. It catalyses the reaction phosphoenolpyruvate + UDP-N-acetyl-alpha-D-glucosamine = UDP-N-acetyl-3-O-(1-carboxyvinyl)-alpha-D-glucosamine + phosphate. Its pathway is cell wall biogenesis; peptidoglycan biosynthesis. Its function is as follows. Cell wall formation. Adds enolpyruvyl to UDP-N-acetylglucosamine. The polypeptide is UDP-N-acetylglucosamine 1-carboxyvinyltransferase (Pseudomonas syringae pv. tomato (strain ATCC BAA-871 / DC3000)).